Reading from the N-terminus, the 133-residue chain is Protein U17 (133 aa).

The helical transmembrane segment at 82 to 102 threads the bilayer; it reads FVSVLWCVILVFVVKIKLFFL.

The protein localises to the membrane. The protein is Protein U17 (U17/U16) of Homo sapiens (Human).